The following is a 337-amino-acid chain: Glyceraldehyde-3-phosphate dehydrogenase 1 (337 aa).

Residues 11–12 (RI), aspartate 33, and arginine 78 contribute to the NAD(+) site. D-glyceraldehyde 3-phosphate-binding positions include 149 to 151 (SCT), threonine 180, 209 to 210 (TG), and arginine 232. Cysteine 150 acts as the Nucleophile in catalysis. NAD(+) is bound at residue asparagine 318.

This sequence belongs to the glyceraldehyde-3-phosphate dehydrogenase family. As to quaternary structure, homotetramer.

Its subcellular location is the cytoplasm. The catalysed reaction is D-glyceraldehyde 3-phosphate + phosphate + NAD(+) = (2R)-3-phospho-glyceroyl phosphate + NADH + H(+). It participates in carbohydrate degradation; glycolysis; pyruvate from D-glyceraldehyde 3-phosphate: step 1/5. The protein is Glyceraldehyde-3-phosphate dehydrogenase 1 (gpd1) of Agaricus bisporus (White button mushroom).